The following is a 1357-amino-acid chain: DNA-directed RNA polymerase subunit beta (1357 aa).

The protein belongs to the RNA polymerase beta chain family. The RNAP catalytic core consists of 2 alpha, 1 beta, 1 beta' and 1 omega subunit. When a sigma factor is associated with the core the holoenzyme is formed, which can initiate transcription.

The catalysed reaction is RNA(n) + a ribonucleoside 5'-triphosphate = RNA(n+1) + diphosphate. Its function is as follows. DNA-dependent RNA polymerase catalyzes the transcription of DNA into RNA using the four ribonucleoside triphosphates as substrates. This chain is DNA-directed RNA polymerase subunit beta, found in Nitrosospira multiformis (strain ATCC 25196 / NCIMB 11849 / C 71).